Reading from the N-terminus, the 78-residue chain is UPF0349 protein RBAM_029300 (78 aa).

The protein belongs to the UPF0349 family.

The polypeptide is UPF0349 protein RBAM_029300 (Bacillus velezensis (strain DSM 23117 / BGSC 10A6 / LMG 26770 / FZB42) (Bacillus amyloliquefaciens subsp. plantarum)).